A 427-amino-acid chain; its full sequence is Histidine--tRNA ligase (427 aa).

This sequence belongs to the class-II aminoacyl-tRNA synthetase family. As to quaternary structure, homodimer.

It localises to the cytoplasm. The catalysed reaction is tRNA(His) + L-histidine + ATP = L-histidyl-tRNA(His) + AMP + diphosphate + H(+). This Corynebacterium urealyticum (strain ATCC 43042 / DSM 7109) protein is Histidine--tRNA ligase.